Consider the following 360-residue polypeptide: GDSL esterase/lipase At2g31550 (360 aa).

The N-terminal stretch at 1-27 (MSTSKAITLTLFITTTLLASCDAAANA) is a signal peptide. A glycan (N-linked (GlcNAc...) asparagine) is linked at Asn26. The active-site Nucleophile is Ser42. N-linked (GlcNAc...) asparagine glycans are attached at residues Asn104 and Asn326. Catalysis depends on residues Asp334 and His337.

It belongs to the 'GDSL' lipolytic enzyme family.

The protein localises to the secreted. The chain is GDSL esterase/lipase At2g31550 from Arabidopsis thaliana (Mouse-ear cress).